Here is a 339-residue protein sequence, read N- to C-terminus: DNA-directed RNA polymerase subunit alpha (339 aa).

Residues 1–237 (MENELMYMNW…EQMNVFINFD (237 aa)) are alpha N-terminal domain (alpha-NTD). The segment at 256–339 (FNENLYRSVN…PPAEDNKEGE (84 aa)) is alpha C-terminal domain (alpha-CTD).

Belongs to the RNA polymerase alpha chain family. Homodimer. The RNAP catalytic core consists of 2 alpha, 1 beta, 1 beta' and 1 omega subunit. When a sigma factor is associated with the core the holoenzyme is formed, which can initiate transcription.

The catalysed reaction is RNA(n) + a ribonucleoside 5'-triphosphate = RNA(n+1) + diphosphate. DNA-dependent RNA polymerase catalyzes the transcription of DNA into RNA using the four ribonucleoside triphosphates as substrates. The protein is DNA-directed RNA polymerase subunit alpha of Desulfosudis oleivorans (strain DSM 6200 / JCM 39069 / Hxd3) (Desulfococcus oleovorans).